The primary structure comprises 262 residues: uncharacterized protein (262 aa).

Residues 5 to 107 enclose the BTB domain; that stretch reads PLISLDVEGV…MIEHKLRTFC (103 aa). A CRIB domain is found at 182–195; the sequence is ISLPRNFTHIAHVG.

This is an uncharacterized protein from Caenorhabditis elegans.